The primary structure comprises 323 residues: Muscleblind-like protein 3 (323 aa).

4 C3H1-type zinc fingers span residues 13–41, 47–73, 177–205, and 213–239; these read WLTL…HPSR, NGRV…HPPP, TDKL…HPLE, and ENSV…HPPA.

Belongs to the muscleblind family. In terms of tissue distribution, expressed in fast and slow myotomal muscle, heart, liver, skin, brain and testis.

The protein localises to the nucleus. It is found in the cytoplasm. Functionally, involved in pre-mRNA alternative splicing regulation. Could inhibit terminal muscle differentiation, acting at approximately the time of myogenin induction. In Takifugu rubripes (Japanese pufferfish), this protein is Muscleblind-like protein 3 (mbnl3).